An 88-amino-acid chain; its full sequence is Exodeoxyribonuclease 7 small subunit (88 aa).

It belongs to the XseB family. Heterooligomer composed of large and small subunits.

The protein resides in the cytoplasm. The enzyme catalyses Exonucleolytic cleavage in either 5'- to 3'- or 3'- to 5'-direction to yield nucleoside 5'-phosphates.. In terms of biological role, bidirectionally degrades single-stranded DNA into large acid-insoluble oligonucleotides, which are then degraded further into small acid-soluble oligonucleotides. The sequence is that of Exodeoxyribonuclease 7 small subunit from Bordetella petrii (strain ATCC BAA-461 / DSM 12804 / CCUG 43448).